Consider the following 145-residue polypeptide: Hemoglobin subunit beta-A (145 aa).

The Globin domain occupies 1–145; it reads MLTAEEKAAV…VANALAHRYH (145 aa). Heme b is bound by residues His62 and His91.

Belongs to the globin family. In terms of assembly, heterotetramer of two alpha chains and two beta chains. In terms of tissue distribution, red blood cells.

Its function is as follows. Involved in oxygen transport from the lung to the various peripheral tissues. This chain is Hemoglobin subunit beta-A, found in Capra hircus (Goat).